The following is a 205-amino-acid chain: Urease accessory protein UreG (205 aa).

Residue 14-21 (GPVGSGKT) participates in GTP binding.

This sequence belongs to the SIMIBI class G3E GTPase family. UreG subfamily. In terms of assembly, homodimer. UreD, UreF and UreG form a complex that acts as a GTP-hydrolysis-dependent molecular chaperone, activating the urease apoprotein by helping to assemble the nickel containing metallocenter of UreC. The UreE protein probably delivers the nickel.

The protein resides in the cytoplasm. In terms of biological role, facilitates the functional incorporation of the urease nickel metallocenter. This process requires GTP hydrolysis, probably effectuated by UreG. This Proteus mirabilis (strain HI4320) protein is Urease accessory protein UreG.